The sequence spans 371 residues: Ligninase LG2 (371 aa).

Residues 1–21 (MAFKQLFAAITVALSLTAANA) form the signal peptide. A propeptide spanning residues 22 to 28 (AVVKEKR) is cleaved from the precursor. 4 disulfides stabilise this stretch: cysteine 31–cysteine 43, cysteine 42–cysteine 313, cysteine 62–cysteine 148, and cysteine 277–cysteine 345. Catalysis depends on histidine 75, which acts as the Proton acceptor. Residues aspartate 76, glycine 94, aspartate 96, and serine 98 each coordinate Ca(2+). Tryptophan 199 bears the 3-hydroxytryptophan mark. Residue histidine 204 coordinates heme b. Residues serine 205, aspartate 222, threonine 224, isoleucine 227, and aspartate 229 each contribute to the Ca(2+) site. The N-linked (GlcNAc...) asparagine glycan is linked to asparagine 285.

Belongs to the peroxidase family. Ligninase subfamily. Ca(2+) serves as cofactor. It depends on heme b as a cofactor.

It catalyses the reaction 1-(3,4-dimethoxyphenyl)-2-(2-methoxyphenoxy)propane-1,3-diol + H2O2 = 3,4-dimethoxybenzaldehyde + guaiacol + glycolaldehyde + H2O. It carries out the reaction 2 (3,4-dimethoxyphenyl)methanol + H2O2 = 2 (3,4-dimethoxyphenyl)methanol radical + 2 H2O. Its pathway is secondary metabolite metabolism; lignin degradation. Its function is as follows. Depolymerization of lignin. Catalyzes the C(alpha)-C(beta) cleavage of the propyl side chains of lignin. This Phanerodontia chrysosporium (White-rot fungus) protein is Ligninase LG2 (GLG2).